Consider the following 212-residue polypeptide: Uracil phosphoribosyltransferase (212 aa).

5-phospho-alpha-D-ribose 1-diphosphate-binding positions include arginine 78, arginine 103, and 130 to 138; that span reads DPMLATGSS. Uracil-binding positions include isoleucine 193 and 198–200; that span reads GDA. Residue aspartate 199 participates in 5-phospho-alpha-D-ribose 1-diphosphate binding.

It belongs to the UPRTase family. Mg(2+) is required as a cofactor.

It carries out the reaction UMP + diphosphate = 5-phospho-alpha-D-ribose 1-diphosphate + uracil. The protein operates within pyrimidine metabolism; UMP biosynthesis via salvage pathway; UMP from uracil: step 1/1. Allosterically activated by GTP. Functionally, catalyzes the conversion of uracil and 5-phospho-alpha-D-ribose 1-diphosphate (PRPP) to UMP and diphosphate. This chain is Uracil phosphoribosyltransferase, found in Pseudomonas savastanoi pv. phaseolicola (strain 1448A / Race 6) (Pseudomonas syringae pv. phaseolicola (strain 1448A / Race 6)).